Consider the following 489-residue polypeptide: Glutamyl-tRNA(Gln) amidotransferase subunit A (489 aa).

Residues lysine 77 and serine 152 each act as charge relay system in the active site. The Acyl-ester intermediate role is filled by serine 176.

This sequence belongs to the amidase family. GatA subfamily. As to quaternary structure, heterotrimer of A, B and C subunits.

The enzyme catalyses L-glutamyl-tRNA(Gln) + L-glutamine + ATP + H2O = L-glutaminyl-tRNA(Gln) + L-glutamate + ADP + phosphate + H(+). Allows the formation of correctly charged Gln-tRNA(Gln) through the transamidation of misacylated Glu-tRNA(Gln) in organisms which lack glutaminyl-tRNA synthetase. The reaction takes place in the presence of glutamine and ATP through an activated gamma-phospho-Glu-tRNA(Gln). This Protochlamydia amoebophila (strain UWE25) protein is Glutamyl-tRNA(Gln) amidotransferase subunit A.